The sequence spans 185 residues: Peptidyl-tRNA hydrolase (185 aa).

TRNA is bound at residue Y14. The Proton acceptor role is filled by H19. TRNA is bound by residues F64, N66, and N112.

This sequence belongs to the PTH family. In terms of assembly, monomer.

It localises to the cytoplasm. The enzyme catalyses an N-acyl-L-alpha-aminoacyl-tRNA + H2O = an N-acyl-L-amino acid + a tRNA + H(+). Hydrolyzes ribosome-free peptidyl-tRNAs (with 1 or more amino acids incorporated), which drop off the ribosome during protein synthesis, or as a result of ribosome stalling. Its function is as follows. Catalyzes the release of premature peptidyl moieties from peptidyl-tRNA molecules trapped in stalled 50S ribosomal subunits, and thus maintains levels of free tRNAs and 50S ribosomes. The sequence is that of Peptidyl-tRNA hydrolase from Lacticaseibacillus paracasei (strain ATCC 334 / BCRC 17002 / CCUG 31169 / CIP 107868 / KCTC 3260 / NRRL B-441) (Lactobacillus paracasei).